Consider the following 354-residue polypeptide: Uroporphyrinogen decarboxylase (354 aa).

Residues R27–R31, D77, Y154, T209, and H327 contribute to the substrate site.

Belongs to the uroporphyrinogen decarboxylase family. Homodimer.

It localises to the cytoplasm. The catalysed reaction is uroporphyrinogen III + 4 H(+) = coproporphyrinogen III + 4 CO2. It participates in porphyrin-containing compound metabolism; protoporphyrin-IX biosynthesis; coproporphyrinogen-III from 5-aminolevulinate: step 4/4. Catalyzes the decarboxylation of four acetate groups of uroporphyrinogen-III to yield coproporphyrinogen-III. This is Uroporphyrinogen decarboxylase from Salmonella agona (strain SL483).